Reading from the N-terminus, the 374-residue chain is tRNA-specific 2-thiouridylase MnmA (374 aa).

ATP is bound by residues 12-19 (GMSGGVDS) and M38. The interaction with target base in tRNA stretch occupies residues 98–100 (NPD). The active-site Nucleophile is the C103. A disulfide bond links C103 and C202. G128 is a binding site for ATP. The interaction with tRNA stretch occupies residues 152–154 (KDQ). C202 serves as the catalytic Cysteine persulfide intermediate. An interaction with tRNA region spans residues 316–317 (RY).

The protein belongs to the MnmA/TRMU family.

Its subcellular location is the cytoplasm. It catalyses the reaction S-sulfanyl-L-cysteinyl-[protein] + uridine(34) in tRNA + AH2 + ATP = 2-thiouridine(34) in tRNA + L-cysteinyl-[protein] + A + AMP + diphosphate + H(+). Functionally, catalyzes the 2-thiolation of uridine at the wobble position (U34) of tRNA, leading to the formation of s(2)U34. The polypeptide is tRNA-specific 2-thiouridylase MnmA (Vibrio vulnificus (strain YJ016)).